Reading from the N-terminus, the 430-residue chain is F-box/kelch-repeat protein At4g33290 (430 aa).

Positions 1–44 (MITDLPKDLIEEILSRVSMTSMRVVRLTCKSWNTLSNSESFKKM) constitute an F-box domain. Kelch repeat units follow at residues 161–207 (LLRF…CVQG), 312–363 (VPFI…IIEE), and 383–430 (LVRI…RPTR).

This is F-box/kelch-repeat protein At4g33290 from Arabidopsis thaliana (Mouse-ear cress).